A 142-amino-acid chain; its full sequence is Large ribosomal subunit protein uL13 (142 aa).

It belongs to the universal ribosomal protein uL13 family. As to quaternary structure, part of the 50S ribosomal subunit.

Functionally, this protein is one of the early assembly proteins of the 50S ribosomal subunit, although it is not seen to bind rRNA by itself. It is important during the early stages of 50S assembly. The chain is Large ribosomal subunit protein uL13 from Shewanella baltica (strain OS185).